The sequence spans 426 residues: MIKLTFNLIKGLDYKKLDKNYQAKLDEIFSQLKNKKTPSANMLGWIDYVDQDHTKIYKSIDNKITEWDKLKVTDVVVIGIGGSFTGIKAILDVVAYLPSEQKRQIHFIRSLSENSFLKILEEVKDKNWGIVVISKSGTTLEPSVGFKLFREALYKQYGEQAQKRIVAITDPKKGVLHDIAVKNKYEMLPIYSDIGGRFSTITPSGLLVAGLVGADYKQLIEGAKKAKADLFASSELKKNSAYTYAALRHYLYTEMKKDVEIAITYEEQHEYLMLQHRQLFGESEGKSLNSLFPTYSVFTTDLHSMGQLYQDGKKIFFETVFSFEKANKNKLKLKNSEFNNDDQLDYLTKKSVNQLNYVACEATKQAHASAGVPIIEIDVKENSAYGFGYLYFWLCVATSVSALLLGHDPYNQPGVENYKQRMFKLL.

The active-site Proton donor is E282. Residues H303 and K419 contribute to the active site.

Belongs to the GPI family.

It localises to the cytoplasm. The enzyme catalyses alpha-D-glucose 6-phosphate = beta-D-fructose 6-phosphate. It functions in the pathway carbohydrate biosynthesis; gluconeogenesis. It participates in carbohydrate degradation; glycolysis; D-glyceraldehyde 3-phosphate and glycerone phosphate from D-glucose: step 2/4. Catalyzes the reversible isomerization of glucose-6-phosphate to fructose-6-phosphate. This chain is Glucose-6-phosphate isomerase, found in Mycoplasmoides gallisepticum (strain R(low / passage 15 / clone 2)) (Mycoplasma gallisepticum).